The chain runs to 377 residues: tRNA pseudouridine synthase Pus10 (377 aa).

Asp-206 (nucleophile) is an active-site residue. The substrate site is built by Tyr-270 and Tyr-339.

It belongs to the pseudouridine synthase Pus10 family.

The catalysed reaction is uridine(54) in tRNA = pseudouridine(54) in tRNA. The enzyme catalyses uridine(55) in tRNA = pseudouridine(55) in tRNA. Its function is as follows. Responsible for synthesis of pseudouridine from uracil-54 and uracil-55 in the psi GC loop of transfer RNAs. The chain is tRNA pseudouridine synthase Pus10 from Picrophilus torridus (strain ATCC 700027 / DSM 9790 / JCM 10055 / NBRC 100828 / KAW 2/3).